The sequence spans 375 residues: Succinyl-diaminopimelate desuccinylase (375 aa).

His66 is a binding site for Zn(2+). Residue Asp68 is part of the active site. A Zn(2+)-binding site is contributed by Asp99. Catalysis depends on Glu133, which acts as the Proton acceptor. Residues Glu134, Glu162, and His348 each coordinate Zn(2+).

It belongs to the peptidase M20A family. DapE subfamily. In terms of assembly, homodimer. Zn(2+) is required as a cofactor. Co(2+) serves as cofactor.

The enzyme catalyses N-succinyl-(2S,6S)-2,6-diaminopimelate + H2O = (2S,6S)-2,6-diaminopimelate + succinate. It participates in amino-acid biosynthesis; L-lysine biosynthesis via DAP pathway; LL-2,6-diaminopimelate from (S)-tetrahydrodipicolinate (succinylase route): step 3/3. Functionally, catalyzes the hydrolysis of N-succinyl-L,L-diaminopimelic acid (SDAP), forming succinate and LL-2,6-diaminopimelate (DAP), an intermediate involved in the bacterial biosynthesis of lysine and meso-diaminopimelic acid, an essential component of bacterial cell walls. This Escherichia coli O17:K52:H18 (strain UMN026 / ExPEC) protein is Succinyl-diaminopimelate desuccinylase.